Reading from the N-terminus, the 294-residue chain is Bifunctional protein FolD 1 (294 aa).

NADP(+)-binding positions include 165–167 (GRS), serine 190, and threonine 231.

Belongs to the tetrahydrofolate dehydrogenase/cyclohydrolase family. Homodimer.

It catalyses the reaction (6R)-5,10-methylene-5,6,7,8-tetrahydrofolate + NADP(+) = (6R)-5,10-methenyltetrahydrofolate + NADPH. The catalysed reaction is (6R)-5,10-methenyltetrahydrofolate + H2O = (6R)-10-formyltetrahydrofolate + H(+). The protein operates within one-carbon metabolism; tetrahydrofolate interconversion. Its function is as follows. Catalyzes the oxidation of 5,10-methylenetetrahydrofolate to 5,10-methenyltetrahydrofolate and then the hydrolysis of 5,10-methenyltetrahydrofolate to 10-formyltetrahydrofolate. The protein is Bifunctional protein FolD 1 of Paenarthrobacter aurescens (strain TC1).